The chain runs to 233 residues: Hydroxyacylglutathione hydrolase (233 aa).

Residues His52, His54, Asp56, His57, His108, Asp125, and His163 each contribute to the Zn(2+) site.

Belongs to the metallo-beta-lactamase superfamily. Glyoxalase II family. Monomer. It depends on Zn(2+) as a cofactor.

It catalyses the reaction an S-(2-hydroxyacyl)glutathione + H2O = a 2-hydroxy carboxylate + glutathione + H(+). It participates in secondary metabolite metabolism; methylglyoxal degradation; (R)-lactate from methylglyoxal: step 2/2. In terms of biological role, thiolesterase that catalyzes the hydrolysis of S-D-lactoyl-glutathione to form glutathione and D-lactic acid. The protein is Hydroxyacylglutathione hydrolase of Pasteurella multocida (strain Pm70).